Reading from the N-terminus, the 428-residue chain is Serine--tRNA ligase (428 aa).

235-237 is an L-serine binding site; sequence TAE. Residue 266–268 participates in ATP binding; sequence RSE. E289 lines the L-serine pocket. Position 353-356 (353-356) interacts with ATP; that stretch reads EISS. Residue S389 coordinates L-serine.

The protein belongs to the class-II aminoacyl-tRNA synthetase family. Type-1 seryl-tRNA synthetase subfamily. In terms of assembly, homodimer. The tRNA molecule binds across the dimer.

Its subcellular location is the cytoplasm. It carries out the reaction tRNA(Ser) + L-serine + ATP = L-seryl-tRNA(Ser) + AMP + diphosphate + H(+). The enzyme catalyses tRNA(Sec) + L-serine + ATP = L-seryl-tRNA(Sec) + AMP + diphosphate + H(+). Its pathway is aminoacyl-tRNA biosynthesis; selenocysteinyl-tRNA(Sec) biosynthesis; L-seryl-tRNA(Sec) from L-serine and tRNA(Sec): step 1/1. Its function is as follows. Catalyzes the attachment of serine to tRNA(Ser). Is also able to aminoacylate tRNA(Sec) with serine, to form the misacylated tRNA L-seryl-tRNA(Sec), which will be further converted into selenocysteinyl-tRNA(Sec). The chain is Serine--tRNA ligase from Pasteurella multocida (strain Pm70).